The sequence spans 260 residues: Lys-63-specific deubiquitinase BRCC36 (260 aa).

The MPN domain occupies 6–149 (VHLESDAFLV…YTCFQSVQAQ (144 aa)). Zn(2+) is bound by residues histidine 92, histidine 94, and aspartate 105. Residues 92–105 (HSHPHITVWPSHVD) carry the JAMM motif motif.

Belongs to the peptidase M67A family. BRCC36 subfamily. Component of the BRCA1-A complex, at least composed of brca1, bard1, uimc1/rap80, abraxas1, brcc3/brcc36, babam2 and babam1/nba1. In the BRCA1-A complex, interacts directly with abraxas1 and babam2. Component of the BRISC complex, at least composed of abraxas2, brcc3/brcc36, babam2 and babam1/nba1. Within the complex, interacts directly with abraxas2. Both the BRCA1-A complex and the BRISC complex bind polyubiquitin. It depends on Zn(2+) as a cofactor.

The protein localises to the nucleus. It is found in the cytoplasm. Its subcellular location is the cytoskeleton. It localises to the spindle pole. Functionally, metalloprotease that specifically cleaves 'Lys-63'-linked polyubiquitin chains. Does not have activity toward 'Lys-48'-linked polyubiquitin chains. Component of the BRCA1-A complex, a complex that specifically recognizes 'Lys-63'-linked ubiquitinated histones H2A and H2AX at DNA lesions sites, leading to target the brca1-bard1 heterodimer to sites of DNA damage at double-strand breaks (DSBs). In the BRCA1-A complex, it specifically removes 'Lys-63'-linked ubiquitin on histones H2A and H2AX, antagonizing the rnf8-dependent ubiquitination at double-strand breaks (DSBs). Catalytic subunit of the BRISC complex, a multiprotein complex that specifically cleaves 'Lys-63'-linked ubiquitin in various substrates. Mediates the specific 'Lys-63'-specific deubiquitination associated with the COP9 signalosome complex (CSN), via the interaction of the BRISC complex with the CSN complex. The BRISC complex is required for normal mitotic spindle assembly and microtubule attachment to kinetochores via its role in deubiquitinating numa1. Plays a role in interferon signaling via its role in the deubiquitination of the interferon receptor ifnar1; deubiquitination increases ifnar1 activity by enhancing its stability and cell surface expression. Acts as a regulator of the NLRP3 inflammasome by mediating deubiquitination of nlrp3. Down-regulates the response to bacterial lipopolysaccharide (LPS) via its role in ifnar1 deubiquitination. The chain is Lys-63-specific deubiquitinase BRCC36 (brcc3) from Salmo salar (Atlantic salmon).